The chain runs to 387 residues: Gamma-butyrobetaine dioxygenase (387 aa).

Residues Cys38, Cys40, Cys43, and His82 each coordinate Zn(2+). Fe cation-binding residues include His202, Asp204, and His347. Ser351 is modified (phosphoserine).

It belongs to the gamma-BBH/TMLD family. Fe(2+) is required as a cofactor. L-ascorbate serves as cofactor. Expressed in the liver and in some extend in the testis and the epididymis.

The protein localises to the cytoplasm. The catalysed reaction is 4-(trimethylamino)butanoate + 2-oxoglutarate + O2 = carnitine + succinate + CO2. The protein operates within amine and polyamine biosynthesis; carnitine biosynthesis. In terms of biological role, catalyzes the formation of L-carnitine from gamma-butyrobetaine. The polypeptide is Gamma-butyrobetaine dioxygenase (Bbox1) (Rattus norvegicus (Rat)).